Consider the following 122-residue polypeptide: Phycocyanin PC645 alpha-2 subunit (122 aa).

Positions 54 and 68 each coordinate (2R,3E)-phycocyanobilin. Mesobiliverdin is bound by residues cysteine 70, lysine 76, glutamate 77, and cysteine 92.

This sequence belongs to the phycoerythrin family. As to quaternary structure, heterotetramer of 2 different alpha chains and 2 identical beta chains which form 2 alpha-beta heterodimers within the heterotetramer. Post-translationally, contains two phycocyanobilin chromophores and one mesobiliverdin chromophore with binding mediated by both the alpha and beta subunits.

The protein resides in the plastid. The protein localises to the chloroplast thylakoid membrane. In terms of biological role, light-harvesting photosynthetic tetrapyrrole chromophore-protein from the phycobiliprotein complex. The sequence is that of Phycocyanin PC645 alpha-2 subunit from Chroomonas sp. (strain CCMP270).